Consider the following 94-residue polypeptide: Cell division protein FtsB (94 aa).

Residues 1–3 (MRT) are Cytoplasmic-facing. The helical transmembrane segment at 4–21 (FAIFLLIALGWLQYTLWF) threads the bilayer. Residues 22–94 (GKNGMSDYAQ…YRIIDENSEG (73 aa)) lie on the Periplasmic side of the membrane. The stretch at 33–71 (SNDVALQEEVNQGLRNRNEQMFAEIDDLKKGSEAIEERA) forms a coiled coil.

This sequence belongs to the FtsB family. In terms of assembly, part of a complex composed of FtsB, FtsL and FtsQ.

It is found in the cell inner membrane. Its function is as follows. Essential cell division protein. May link together the upstream cell division proteins, which are predominantly cytoplasmic, with the downstream cell division proteins, which are predominantly periplasmic. The chain is Cell division protein FtsB from Aliivibrio fischeri (strain ATCC 700601 / ES114) (Vibrio fischeri).